Consider the following 152-residue polypeptide: Small ribosomal subunit protein bS16 (152 aa).

Residues Ala-118–Ala-130 are compositionally biased toward basic and acidic residues. Positions Ala-118–Ser-152 are disordered. Over residues Ala-131–Ala-144 the composition is skewed to low complexity.

This sequence belongs to the bacterial ribosomal protein bS16 family.

This Beutenbergia cavernae (strain ATCC BAA-8 / DSM 12333 / CCUG 43141 / JCM 11478 / NBRC 16432 / NCIMB 13614 / HKI 0122) protein is Small ribosomal subunit protein bS16.